The following is a 263-amino-acid chain: uncharacterized protein (263 aa).

Gly-31–Thr-38 contacts ATP.

It belongs to the CbbQ/NirQ/NorQ/GpvN family.

This is an uncharacterized protein from Staphylococcus epidermidis (strain ATCC 35984 / DSM 28319 / BCRC 17069 / CCUG 31568 / BM 3577 / RP62A).